We begin with the raw amino-acid sequence, 593 residues long: Elongation factor 4 (593 aa).

The 180-residue stretch at 2–181 (DKIRNFCIIA…AVIERIPHPQ (180 aa)) folds into the tr-type G domain. GTP contacts are provided by residues 14 to 19 (DHGKST) and 128 to 131 (NKCD).

It belongs to the TRAFAC class translation factor GTPase superfamily. Classic translation factor GTPase family. LepA subfamily.

The protein resides in the cell inner membrane. The catalysed reaction is GTP + H2O = GDP + phosphate + H(+). Functionally, required for accurate and efficient protein synthesis under certain stress conditions. May act as a fidelity factor of the translation reaction, by catalyzing a one-codon backward translocation of tRNAs on improperly translocated ribosomes. Back-translocation proceeds from a post-translocation (POST) complex to a pre-translocation (PRE) complex, thus giving elongation factor G a second chance to translocate the tRNAs correctly. Binds to ribosomes in a GTP-dependent manner. This chain is Elongation factor 4, found in Bacteroides fragilis (strain ATCC 25285 / DSM 2151 / CCUG 4856 / JCM 11019 / LMG 10263 / NCTC 9343 / Onslow / VPI 2553 / EN-2).